A 321-amino-acid chain; its full sequence is Mas-related G-protein coupled receptor member D (321 aa).

The Extracellular segment spans residues 1–8; that stretch reads MNSTLDSS. N-linked (GlcNAc...) asparagine glycosylation is present at Asn-2. A helical transmembrane segment spans residues 9–29; that stretch reads PAPGLTISPTMDLVTWIYFSV. Thr-30 is a topological domain (cytoplasmic). A helical transmembrane segment spans residues 31-51; that stretch reads FLAMATCVGGMAGNSLVIWLL. Residues 52-72 are Extracellular-facing; that stretch reads SCNGMQRSPFCVYVLNLAVAD. A helical membrane pass occupies residues 73-93; that stretch reads FLFLFCMASMLSLETGPLLIV. Topologically, residues 94-146 are cytoplasmic; the sequence is NISAKIYEGMRRIKYFAYTAGLSLLTAISTQRCLSVLFPIWYKCHRPRHLSSV. A helical transmembrane segment spans residues 147 to 167; sequence VSGALWALAFLMNFLASFFCV. Residues 168 to 181 lie on the Extracellular side of the membrane; it reads QFWHPNKHQCFKVD. The helical transmembrane segment at 182-202 threads the bilayer; it reads IVFNSLILGIFMPVMILTSTI. The Cytoplasmic segment spans residues 203–220; sequence LFIRVRKNSLMQRRRPRR. Residues 221-241 form a helical membrane-spanning segment; sequence LYVVILTSILVFLTCSLPLGI. The Extracellular segment spans residues 242-260; that stretch reads NWFLLYWVDVKRDVRLLYS. The chain crosses the membrane as a helical span at residues 261 to 281; that stretch reads CVSRFSSSLSSSANPVIYFLV. The Cytoplasmic portion of the chain corresponds to 282-321; sequence GSQKSHRLQESLGAVLGRALRDEPEPEGRETPSTCTNDGV. The segment covering 302–311 has biased composition (basic and acidic residues); that stretch reads RDEPEPEGRE. Positions 302 to 321 are disordered; that stretch reads RDEPEPEGRETPSTCTNDGV. The span at 312–321 shows a compositional bias: polar residues; sequence TPSTCTNDGV.

Belongs to the G-protein coupled receptor 1 family. Mas subfamily. Expressed in a subset of sensory neurons that includes nociceptors. Expressed in the subclass of non-peptidergic sensory neurons that are IB4(+) and VR1(-).

Its subcellular location is the cell membrane. May regulate nociceptor function and/or development, including the sensation or modulation of pain. Functions as a specific membrane receptor for beta-alanine. The receptor couples with G-protein G(q) and G(i). The chain is Mas-related G-protein coupled receptor member D (Mrgprd) from Mus musculus (Mouse).